Here is a 160-residue protein sequence, read N- to C-terminus: Transcriptional regulator MraZ (160 aa).

SpoVT-AbrB domains follow at residues 5–50 (KFET…EGVY) and 93–136 (AIEC…SQAE).

It belongs to the MraZ family. In terms of assembly, forms oligomers.

The protein localises to the cytoplasm. It localises to the nucleoid. This chain is Transcriptional regulator MraZ, found in Geotalea uraniireducens (strain Rf4) (Geobacter uraniireducens).